We begin with the raw amino-acid sequence, 345 residues long: Sulfate/thiosulfate import ATP-binding protein CysA (345 aa).

One can recognise an ABC transporter domain in the interval 3–237 (IQVSGLCKHF…PRTEFVYQFV (235 aa)). 35-42 (GPSGCGKT) provides a ligand contact to ATP.

It belongs to the ABC transporter superfamily. Sulfate/tungstate importer (TC 3.A.1.6) family. In terms of assembly, the complex is composed of two ATP-binding proteins (CysA), two transmembrane proteins (CysT and CysW) and a solute-binding protein (CysP).

The protein localises to the cell inner membrane. It carries out the reaction sulfate(out) + ATP + H2O = sulfate(in) + ADP + phosphate + H(+). The enzyme catalyses thiosulfate(out) + ATP + H2O = thiosulfate(in) + ADP + phosphate + H(+). Part of the ABC transporter complex CysAWTP involved in sulfate/thiosulfate import. Responsible for energy coupling to the transport system. This chain is Sulfate/thiosulfate import ATP-binding protein CysA, found in Vibrio vulnificus (strain CMCP6).